The primary structure comprises 134 residues: Profilin (134 aa).

The protein belongs to the profilin family. Occurs in many kinds of cells as a complex with monomeric actin in a 1:1 ratio.

It is found in the cytoplasm. Its subcellular location is the cytoskeleton. Binds to actin and affects the structure of the cytoskeleton. At high concentrations, profilin prevents the polymerization of actin, whereas it enhances it at low concentrations. By binding to PIP2, it inhibits the formation of IP3 and DG. The protein is Profilin of Daucus carota (Wild carrot).